Consider the following 391-residue polypeptide: Elongation factor Tu (391 aa).

The 192-residue stretch at lysine 10 to glutamate 201 folds into the tr-type G domain. A G1 region spans residues glycine 19–threonine 26. A GTP-binding site is contributed by glycine 19–threonine 26. Threonine 26 lines the Mg(2+) pocket. The interval glycine 55–serine 59 is G2. The tract at residues aspartate 76–glycine 79 is G3. GTP is bound by residues aspartate 76–histidine 80 and asparagine 131–aspartate 134. Residues asparagine 131–aspartate 134 are G4. Positions serine 169–leucine 171 are G5.

It belongs to the TRAFAC class translation factor GTPase superfamily. Classic translation factor GTPase family. EF-Tu/EF-1A subfamily. Monomer.

The protein resides in the cytoplasm. The enzyme catalyses GTP + H2O = GDP + phosphate + H(+). Functionally, GTP hydrolase that promotes the GTP-dependent binding of aminoacyl-tRNA to the A-site of ribosomes during protein biosynthesis. This is Elongation factor Tu from Rhizobium johnstonii (strain DSM 114642 / LMG 32736 / 3841) (Rhizobium leguminosarum bv. viciae).